Here is a 299-residue protein sequence, read N- to C-terminus: Nucleotide-binding protein AFE_3021 (299 aa).

11-18 serves as a coordination point for ATP; it reads GLSGSGKS. 62 to 65 lines the GTP pocket; that stretch reads DVRN.

Belongs to the RapZ-like family.

In terms of biological role, displays ATPase and GTPase activities. This Acidithiobacillus ferrooxidans (strain ATCC 23270 / DSM 14882 / CIP 104768 / NCIMB 8455) (Ferrobacillus ferrooxidans (strain ATCC 23270)) protein is Nucleotide-binding protein AFE_3021.